The sequence spans 409 residues: Phosphatidylserine decarboxylase proenzyme, mitochondrial (409 aa).

The transit peptide at Met-1–Lys-52 directs the protein to the mitochondrion. The segment at Gln-36–Ala-103 is necessary for localization to both lipid droplets and mitochondria. Residues Ile-53–Leu-63 are Mitochondrial matrix-facing. The chain crosses the membrane as a helical span at residues Leu-64–Gln-82. Over Tyr-83–Leu-409 the chain is Mitochondrial intermembrane. Active-site charge relay system; for autoendoproteolytic cleavage activity residues include Asp-191, His-267, and Ser-378. Catalysis depends on Ser-378, which acts as the Schiff-base intermediate with substrate; via pyruvic acid; for decarboxylase activity. Ser-378 carries the pyruvic acid (Ser); by autocatalysis modification.

It belongs to the phosphatidylserine decarboxylase family. PSD-B subfamily. Eukaryotic type I sub-subfamily. Heterodimer of a large membrane-associated beta subunit and a small pyruvoyl-containing alpha subunit. The cofactor is pyruvate. In terms of processing, is synthesized initially as an inactive proenzyme. Formation of the active enzyme involves a self-maturation process in which the active site pyruvoyl group is generated from an internal serine residue via an autocatalytic post-translational modification. Two non-identical subunits are generated from the proenzyme in this reaction, and the pyruvate is formed at the N-terminus of the alpha chain, which is derived from the carboxyl end of the proenzyme. The autoendoproteolytic cleavage occurs by a canonical serine protease mechanism, in which the side chain hydroxyl group of the serine supplies its oxygen atom to form the C-terminus of the beta chain, while the remainder of the serine residue undergoes an oxidative deamination to produce ammonia and the pyruvoyl prosthetic group on the alpha chain. During this reaction, the Ser that is part of the protease active site of the proenzyme becomes the pyruvoyl prosthetic group, which constitutes an essential element of the active site of the mature decarboxylase.

It localises to the mitochondrion inner membrane. The protein resides in the cytoplasm. Its subcellular location is the lipid droplet. The enzyme catalyses a 1,2-diacyl-sn-glycero-3-phospho-L-serine + H(+) = a 1,2-diacyl-sn-glycero-3-phosphoethanolamine + CO2. Its pathway is phospholipid metabolism; phosphatidylethanolamine biosynthesis. Its function is as follows. Catalyzes the formation of phosphatidylethanolamine (PtdEtn) from phosphatidylserine (PtdSer). Plays a central role in phospholipid metabolism and in the interorganelle trafficking of phosphatidylserine. May be involved in lipid droplet biogenesis at the endoplasmic reticulum membrane. The polypeptide is Phosphatidylserine decarboxylase proenzyme, mitochondrial (Homo sapiens (Human)).